The sequence spans 2046 residues: Protein TIC 214 (2046 aa).

6 helical membrane-spanning segments follow: residues 18–38 (VSGP…LPFG), 54–74 (LYGI…FLSM), 79–99 (IYAA…YTFC), 125–145 (ILSL…LLAN), 163–183 (ISFM…FINL), and 214–234 (TFSV…PLIF). Disordered stretches follow at residues 278–299 (DEDR…EDRS), 320–472 (ARSV…VPRE), and 1833–1898 (AKDS…EDEI). 3 stretches are compositionally biased toward basic and acidic residues: residues 322-335 (SVAE…EHRS), 344-368 (SVAE…RSVA), and 378-457 (AKKD…RSVA). Over residues 1833–1866 (AKDSNANDINAKDSNANDINANDSNAKDSNANDI) the composition is skewed to low complexity. Basic and acidic residues predominate over residues 1882 to 1898 (NAKDSNADVPKKKEDEI).

Belongs to the TIC214 family. In terms of assembly, part of the Tic complex.

It localises to the plastid. The protein localises to the chloroplast inner membrane. Involved in protein precursor import into chloroplasts. May be part of an intermediate translocation complex acting as a protein-conducting channel at the inner envelope. In Pinus koraiensis (Korean pine), this protein is Protein TIC 214.